A 536-amino-acid polypeptide reads, in one-letter code: MEKFGVHNPATELATVGLGGAASVRYNFSAAALYEEAIRRGEAELTAQGALRALTGQHTGRSPRDKFVVRDANTDGQIWWDNNKPLSPEHFALLRDDMLAHAAGKDLFAQDLVGGAEEGHALPTRVITELAWHSLFIRNLLIRPEAAALPTFVPKLTIIDLPSFKADPARHGCRSETVIACDLTNGLVLIGGTSYAGEMKKSVFTVLNYLLPAKGVMPMHCSANVGPDGDAAVFFGLSGTGKTTLSADPARTLIGDDEHGWSENGIFNFEGGCYAKTIRLSAEAEPEIYATTQRFGTVLENVVLNERREPDFDDGSLTENTRCAYPMHFIPNASETGRAGHPKTIIMLTADAFGVMPPIARLTPDQAMYHFLSGYTAKVAGTEKGVVEPEATFSTCFGAPFMPRHPAEYGNLLKELISRHGVECWLVNTGWTGGAYGTGKRMPIKATRGLLAAALSGKLGQLQFRTDTNFGFAVPVSVDGVDGSILDPRSTWADKAAYDAQAEKLVSMFIANFAKFEDHVDGGVRDAAPGVKAAAE.

Residues Arg61, Tyr195, and Lys201 each coordinate substrate. Residues Lys201, His220, and 236-244 (GLSGTGKTT) each bind ATP. Residues Lys201 and His220 each contribute to the Mn(2+) site. Asp257 is a Mn(2+) binding site. ATP is bound by residues Glu285, Arg322, and Thr447. Arg322 contributes to the substrate binding site.

It belongs to the phosphoenolpyruvate carboxykinase (ATP) family. Mn(2+) serves as cofactor.

It is found in the cytoplasm. The enzyme catalyses oxaloacetate + ATP = phosphoenolpyruvate + ADP + CO2. The protein operates within carbohydrate biosynthesis; gluconeogenesis. Involved in the gluconeogenesis. Catalyzes the conversion of oxaloacetate (OAA) to phosphoenolpyruvate (PEP) through direct phosphoryl transfer between the nucleoside triphosphate and OAA. In Rhizobium etli (strain ATCC 51251 / DSM 11541 / JCM 21823 / NBRC 15573 / CFN 42), this protein is Phosphoenolpyruvate carboxykinase (ATP).